The primary structure comprises 388 residues: MTMRIDTDKQMNLLSDKNVAIIGGGPVGLTMAKLLQQNGIDVSVYERDNDREARIFGGTLDLHKGSGQEAMKKAGLLQTYYDLALPMGVNIADKKGNILSTKNVKPENRFDNPEINRNDLRAILLNSLENDTVIWDRKLVMLEPGKKKWTLTFENKPSETADLVILANGGMSKVRKFVTDTEVEETGTFNIQADIHQPEINCPGFFQLCNGNRLMASHQGNLLFANPNNNGALHFGISFKTPDEWKNQTQVDFQNRNSVVDFLLKEFSDWDERYKELIHTTLSFVGLATRIFPLEKPWKSKRPLPITMIGDAAHLMPPFAGQGVNSGLVDALILSDNLADGKFNSIEEAVKNYEQQMFMYGKEAQEESTQNEIEMFKPDFTFQQLLNV.

Residue arginine 54 participates in NADPH binding. Aspartate 61, arginine 117, and aspartate 311 together coordinate FAD.

It belongs to the aromatic-ring hydroxylase family. TetX subfamily. As to quaternary structure, monomer. FAD is required as a cofactor.

The protein resides in the cytoplasm. The catalysed reaction is a tetracycline + NADPH + O2 + H(+) = an 11a-hydroxytetracycline + NADP(+) + H2O. It carries out the reaction tetracycline + NADPH + O2 + H(+) = 11a-hydroxytetracycline + NADP(+) + H2O. It catalyses the reaction oxytetracycline + NADPH + O2 + H(+) = 11a-hydroxy-oxytetracycline + NADP(+) + H2O. Its function is as follows. An FAD-requiring monooxygenase active on some tetracycline antibiotic derivatives, which leads to their inactivation. Hydroxylates carbon 11a of tetracycline and some analogs. In terms of biological role, confers resistance to tetracycline via an oxidoreductase activity; NADPH is more active than NAD. Expression in E.coli leads to breakdown of tetracycline. Confers resistance to doxycycline, chlortetracycline, oxytetracycline and minocycline. This chain is Flavin-dependent monooxygenase, found in Bacteroides fragilis.